Here is a 363-residue protein sequence, read N- to C-terminus: Ribosomal RNA large subunit methyltransferase M (363 aa).

Residues S194, 227 to 230 (CPGG), D246, D266, and D284 each bind S-adenosyl-L-methionine. The active-site Proton acceptor is the K313.

It belongs to the class I-like SAM-binding methyltransferase superfamily. RNA methyltransferase RlmE family. RlmM subfamily. Monomer.

It is found in the cytoplasm. It carries out the reaction cytidine(2498) in 23S rRNA + S-adenosyl-L-methionine = 2'-O-methylcytidine(2498) in 23S rRNA + S-adenosyl-L-homocysteine + H(+). In terms of biological role, catalyzes the 2'-O-methylation at nucleotide C2498 in 23S rRNA. The sequence is that of Ribosomal RNA large subunit methyltransferase M from Haemophilus influenzae (strain PittGG).